The primary structure comprises 408 residues: Homogentisate geranylgeranyltransferase (408 aa).

The N-terminal 68 residues, 1-68 (MQATTAAAAA…SAISQATSPR (68 aa)), are a transit peptide targeting the chloroplast. 9 helical membrane-spanning segments follow: residues 122–142 (HTIFGTIIGITSVSLLPMKSI), 149–169 (VLKGYLEALAAALCMNIYVVG), 194–214 (SVATGVFLVVTFLIMSFSIGI), 217–237 (GSVPLMYALVVSFLLGSAYSI), 248–268 (ALLAASCILFVRAILVQLAFF), 286–306 (LVFATLFMCCFSAVIALFKDI), 329–349 (VYQLCISILLTAYLAATVVGA), 352–372 (THLLQKIITVSGHGLLALTLW), and 386–406 (VTSFYMFIWKLFYAEYFLIPF).

Belongs to the UbiA prenyltransferase family.

The protein localises to the plastid. It localises to the chloroplast membrane. It catalyses the reaction homogentisate + (2E,6E,10E)-geranylgeranyl diphosphate + H(+) = 6-geranylgeranyl-2-methylbenzene-1,4-diol + CO2 + diphosphate. It participates in cofactor biosynthesis; tocopherol biosynthesis. Its function is as follows. Involved in the synthesis of tocotrienol (vitamin E). Catalyzes the condensation of homogentisate and geranylgeranyl diphosphate to form 2-methyl-6-geranylgeranylbenzoquinol. Possesses low activity with phytyl diphosphate as substrate. This is Homogentisate geranylgeranyltransferase from Triticum aestivum (Wheat).